Here is a 328-residue protein sequence, read N- to C-terminus: tRNA dimethylallyltransferase (328 aa).

25-32 contacts ATP; that stretch reads GPTAVGKT. 27-32 is a binding site for substrate; that stretch reads TAVGKT. The interval 50–53 is interaction with substrate tRNA; the sequence is DSMQ.

The protein belongs to the IPP transferase family. As to quaternary structure, monomer. Mg(2+) is required as a cofactor.

The catalysed reaction is adenosine(37) in tRNA + dimethylallyl diphosphate = N(6)-dimethylallyladenosine(37) in tRNA + diphosphate. In terms of biological role, catalyzes the transfer of a dimethylallyl group onto the adenine at position 37 in tRNAs that read codons beginning with uridine, leading to the formation of N6-(dimethylallyl)adenosine (i(6)A). The chain is tRNA dimethylallyltransferase from Halothermothrix orenii (strain H 168 / OCM 544 / DSM 9562).